Reading from the N-terminus, the 223-residue chain is Small heat shock protein hspI, mitochondrial (223 aa).

A mitochondrion-targeting transit peptide spans methionine 1 to glycine 23. The region spanning lysine 109–glutamine 223 is the sHSP domain.

It belongs to the small heat shock protein (HSP20) family.

The protein localises to the mitochondrion. This Dictyostelium discoideum (Social amoeba) protein is Small heat shock protein hspI, mitochondrial (hspI).